The primary structure comprises 188 residues: Elongation factor P (188 aa).

Belongs to the elongation factor P family.

It localises to the cytoplasm. The protein operates within protein biosynthesis; polypeptide chain elongation. Involved in peptide bond synthesis. Stimulates efficient translation and peptide-bond synthesis on native or reconstituted 70S ribosomes in vitro. Probably functions indirectly by altering the affinity of the ribosome for aminoacyl-tRNA, thus increasing their reactivity as acceptors for peptidyl transferase. The polypeptide is Elongation factor P (Natranaerobius thermophilus (strain ATCC BAA-1301 / DSM 18059 / JW/NM-WN-LF)).